Here is a 348-residue protein sequence, read N- to C-terminus: Anthranilate phosphoribosyltransferase (348 aa).

Residues glycine 87, 90 to 91 (GD), threonine 95, 97 to 100 (NIST), 115 to 123 (KHGNRSASG), and serine 127 contribute to the 5-phospho-alpha-D-ribose 1-diphosphate site. Residue glycine 87 coordinates anthranilate. Serine 99 contributes to the Mg(2+) binding site. Asparagine 118 lines the anthranilate pocket. Arginine 173 contributes to the anthranilate binding site. Mg(2+) contacts are provided by aspartate 232 and glutamate 233.

The protein belongs to the anthranilate phosphoribosyltransferase family. Homodimer. Mg(2+) is required as a cofactor.

It carries out the reaction N-(5-phospho-beta-D-ribosyl)anthranilate + diphosphate = 5-phospho-alpha-D-ribose 1-diphosphate + anthranilate. The protein operates within amino-acid biosynthesis; L-tryptophan biosynthesis; L-tryptophan from chorismate: step 2/5. Catalyzes the transfer of the phosphoribosyl group of 5-phosphorylribose-1-pyrophosphate (PRPP) to anthranilate to yield N-(5'-phosphoribosyl)-anthranilate (PRA). The sequence is that of Anthranilate phosphoribosyltransferase from Synechococcus sp. (strain CC9311).